We begin with the raw amino-acid sequence, 257 residues long: Probable ABC transporter arginine-binding protein ArtJ (257 aa).

The N-terminal stretch at 1–23 (MCIKRKKTWIAFLAVVCSFCLTG) is a signal peptide. 6 residues coordinate L-arginine: Asn41, Glu48, Gly100, Ser102, Arg107, and Tyr151.

It belongs to the bacterial solute-binding protein 3 family.

The protein resides in the secreted. Its subcellular location is the cell surface. Probably part of an ABC transporter complex involved in arginine transport. Binds arginine. Interacts with host epithelial cells, suggesting a role in host-cell adhesion during infection. This chain is Probable ABC transporter arginine-binding protein ArtJ, found in Chlamydia trachomatis serovar D (strain ATCC VR-885 / DSM 19411 / UW-3/Cx).